Consider the following 403-residue polypeptide: Argininosuccinate synthase (403 aa).

Residues 13-21 (AYSGGLDTS) and alanine 40 contribute to the ATP site. L-citrulline-binding residues include tyrosine 92 and serine 97. Position 122 (glycine 122) interacts with ATP. Residues threonine 124, asparagine 128, and aspartate 129 each contribute to the L-aspartate site. Asparagine 128 is a binding site for L-citrulline. Residues arginine 132, serine 181, serine 190, glutamate 266, and tyrosine 278 each coordinate L-citrulline.

It belongs to the argininosuccinate synthase family. Type 1 subfamily. As to quaternary structure, homotetramer.

It localises to the cytoplasm. It catalyses the reaction L-citrulline + L-aspartate + ATP = 2-(N(omega)-L-arginino)succinate + AMP + diphosphate + H(+). Its pathway is amino-acid biosynthesis; L-arginine biosynthesis; L-arginine from L-ornithine and carbamoyl phosphate: step 2/3. In Aliivibrio fischeri (strain MJ11) (Vibrio fischeri), this protein is Argininosuccinate synthase.